Consider the following 357-residue polypeptide: Membrane-bound lytic murein transglycosylase C (357 aa).

Residues 1–16 (MKKLLALFVIAPILIS) form the signal peptide. Residue Cys-17 is the site of N-palmitoyl cysteine attachment. Residue Cys-17 is the site of S-diacylglycerol cysteine attachment.

This sequence belongs to the transglycosylase Slt family.

The protein resides in the cell outer membrane. It catalyses the reaction Exolytic cleavage of the (1-&gt;4)-beta-glycosidic linkage between N-acetylmuramic acid (MurNAc) and N-acetylglucosamine (GlcNAc) residues in peptidoglycan, from either the reducing or the non-reducing ends of the peptidoglycan chains, with concomitant formation of a 1,6-anhydrobond in the MurNAc residue.. In terms of biological role, murein-degrading enzyme. May play a role in recycling of muropeptides during cell elongation and/or cell division. This is Membrane-bound lytic murein transglycosylase C from Photorhabdus laumondii subsp. laumondii (strain DSM 15139 / CIP 105565 / TT01) (Photorhabdus luminescens subsp. laumondii).